A 707-amino-acid chain; its full sequence is Polyribonucleotide nucleotidyltransferase (707 aa).

Mg(2+)-binding residues include D488 and D494. The KH domain maps to P555–I615. An S1 motif domain is found at G625 to V692.

The protein belongs to the polyribonucleotide nucleotidyltransferase family. It depends on Mg(2+) as a cofactor.

It localises to the cytoplasm. It catalyses the reaction RNA(n+1) + phosphate = RNA(n) + a ribonucleoside 5'-diphosphate. Its function is as follows. Involved in mRNA degradation. Catalyzes the phosphorolysis of single-stranded polyribonucleotides processively in the 3'- to 5'-direction. This is Polyribonucleotide nucleotidyltransferase from Thermotoga neapolitana (strain ATCC 49049 / DSM 4359 / NBRC 107923 / NS-E).